The following is a 258-amino-acid chain: MSASNSLVRVEPLAPSFAAVAGQWAQRLGLPQELAEAEFALQVGEAGLQLQLLEAQAPGPVRVDFVEGAAAHRRQFGGGSGQMIAKAVGIQPGIRPRVLDATAGLGRDAFVLATLGCEVSLIERQPLIAALLDDGLSRAAADADVAAIAARMRLLEGNAIELMQHWRGEPPQVIYLDPMFPHRDKSALVKKEMRLFRPFVGDDLDAPALLSAALELASHRVVVKRPRKAPAIDGSKPGYSLEGKSSRYDIYPKKKLQA.

S-adenosyl-L-methionine contacts are provided by residues 107-108, 123-124, and Asp177; these read RD and ER.

Belongs to the methyltransferase superfamily. RsmJ family.

The protein resides in the cytoplasm. It catalyses the reaction guanosine(1516) in 16S rRNA + S-adenosyl-L-methionine = N(2)-methylguanosine(1516) in 16S rRNA + S-adenosyl-L-homocysteine + H(+). In terms of biological role, specifically methylates the guanosine in position 1516 of 16S rRNA. This chain is Ribosomal RNA small subunit methyltransferase J, found in Stutzerimonas stutzeri (strain A1501) (Pseudomonas stutzeri).